An 84-amino-acid polypeptide reads, in one-letter code: MLYKDIKNKSTTELNDLIVELKAELFLLRFKNKTSQQEQTHKIQVVRKDVAKVLTALKEKQILGEKELINKIDKKEVKKNARKN.

It belongs to the universal ribosomal protein uL29 family.

This chain is Large ribosomal subunit protein uL29, found in Mycoplasma mobile (strain ATCC 43663 / 163K / NCTC 11711) (Mesomycoplasma mobile).